A 180-amino-acid polypeptide reads, in one-letter code: ADP-ribosylation factor 5 (180 aa).

Gly-2 carries the N-myristoyl glycine lipid modification. GTP contacts are provided by residues 24 to 31 (GLDAAGKT), 67 to 71 (DVGGQ), and 126 to 129 (NKQD).

This sequence belongs to the small GTPase superfamily. Arf family.

It localises to the golgi apparatus. Its function is as follows. GTP-binding protein involved in protein trafficking; may modulate vesicle budding and uncoating within the Golgi apparatus. The polypeptide is ADP-ribosylation factor 5 (ARF5) (Gallus gallus (Chicken)).